Here is a 439-residue protein sequence, read N- to C-terminus: Sodium-dependent phosphate transport protein 3 (439 aa).

N-linked (GlcNAc...) asparagine glycans are attached at residues Asn-47, Asn-56, Asn-68, and Asn-69. The next 9 helical transmembrane spans lie at 98 to 118, 130 to 150, 183 to 203, 211 to 231, 273 to 293, 317 to 337, 350 to 369, 374 to 396, and 415 to 435; these read INYGIILTLIPSGYLAGIFGA, SLLTLFTPLAADFGVILVIMV, TIAGSGSAFGSFIILCVGGLI, FIFYIFGSTGCVCCLLWFTVI, LPLWAIFLGFFSHFWLCTIIL, LPFIAAASCTILGGQLADFLL, LFSSLGLLLPSICAVALPFV, VITIILLILIPGTSNLCDSGFII, and GFGLIAGIISSTATGFLISQV.

This sequence belongs to the major facilitator superfamily. Sodium/anion cotransporter family. Expressed in the small intestine, kidney, spleen and testis. Not detected in fetal brain, bone marrow, and mammary gland.

Its subcellular location is the apical cell membrane. It carries out the reaction 3 Na(+)(out) + phosphate(out) = 3 Na(+)(in) + phosphate(in). The enzyme catalyses urate(out) + n chloride(in) = urate(in) + n chloride(out). Its function is as follows. Acts as a membrane potential-dependent organic anion transporter, the transport requires a low concentration of chloride ions. Mediates chloride-dependent transport of urate. Can actively transport inorganic phosphate into cells via Na(+) cotransport. The sequence is that of Sodium-dependent phosphate transport protein 3 (SLC17A2) from Homo sapiens (Human).